Consider the following 395-residue polypeptide: Ankyrin repeat domain-containing protein 65 (395 aa).

ANK repeat units lie at residues 52–81 (QAWG…SVEE), 85–114 (AGRT…QVGA), 118–147 (AGRT…PANA), 151–180 (AGLT…PGPT), 185–212 (RGWT…GGAR), 213–241 (LDSV…PVDA), 245–274 (VGAT…DPSL), 278–307 (HGRS…EVDS), 311–340 (LGLT…EINA), and 344–373 (LHKT…SPTL).

This Bos taurus (Bovine) protein is Ankyrin repeat domain-containing protein 65 (ANKRD65).